A 196-amino-acid polypeptide reads, in one-letter code: MARTAEVVRETKETQIRVWIDLDGTGVSTISTGIGFYDHMLESFARHGGFDLKVETKGDLHIDMHHTVEDTGIVLGQAIHKALDGFKGIRRFGSAYIPMDETLTRCAIDLSNRPYLIWKVEFKRPKVGEMDTELFKEFHHAFAMNSGACIHLETLYGDNTHHVAESGFKALARALRQAVEIDPKTGGQAPSTKGVL.

Belongs to the imidazoleglycerol-phosphate dehydratase family.

Its subcellular location is the cytoplasm. It catalyses the reaction D-erythro-1-(imidazol-4-yl)glycerol 3-phosphate = 3-(imidazol-4-yl)-2-oxopropyl phosphate + H2O. It functions in the pathway amino-acid biosynthesis; L-histidine biosynthesis; L-histidine from 5-phospho-alpha-D-ribose 1-diphosphate: step 6/9. This is Imidazoleglycerol-phosphate dehydratase from Caulobacter vibrioides (strain ATCC 19089 / CIP 103742 / CB 15) (Caulobacter crescentus).